Consider the following 224-residue polypeptide: Phosphoribosylformylglycinamidine synthase subunit PurQ (224 aa).

The Glutamine amidotransferase type-1 domain occupies 1–224 (MIAIIKFPGT…ILLRRLGEWA (224 aa)). C84 acts as the Nucleophile in catalysis. Catalysis depends on residues H196 and E198.

In terms of assembly, part of the FGAM synthase complex composed of 1 PurL, 1 PurQ and 2 PurS subunits.

It localises to the cytoplasm. It catalyses the reaction N(2)-formyl-N(1)-(5-phospho-beta-D-ribosyl)glycinamide + L-glutamine + ATP + H2O = 2-formamido-N(1)-(5-O-phospho-beta-D-ribosyl)acetamidine + L-glutamate + ADP + phosphate + H(+). The enzyme catalyses L-glutamine + H2O = L-glutamate + NH4(+). The protein operates within purine metabolism; IMP biosynthesis via de novo pathway; 5-amino-1-(5-phospho-D-ribosyl)imidazole from N(2)-formyl-N(1)-(5-phospho-D-ribosyl)glycinamide: step 1/2. Its function is as follows. Part of the phosphoribosylformylglycinamidine synthase complex involved in the purines biosynthetic pathway. Catalyzes the ATP-dependent conversion of formylglycinamide ribonucleotide (FGAR) and glutamine to yield formylglycinamidine ribonucleotide (FGAM) and glutamate. The FGAM synthase complex is composed of three subunits. PurQ produces an ammonia molecule by converting glutamine to glutamate. PurL transfers the ammonia molecule to FGAR to form FGAM in an ATP-dependent manner. PurS interacts with PurQ and PurL and is thought to assist in the transfer of the ammonia molecule from PurQ to PurL. This Saccharolobus solfataricus (strain ATCC 35092 / DSM 1617 / JCM 11322 / P2) (Sulfolobus solfataricus) protein is Phosphoribosylformylglycinamidine synthase subunit PurQ.